The sequence spans 332 residues: Sphingolipid delta(4)-desaturase DES1-like (332 aa).

The next 3 helical transmembrane spans lie at 55-75 (PWAF…AAIL), 83-103 (ILSI…LAIH), and 119-139 (CLGI…FQKY). The short motif at 103 to 107 (HELSH) is the Histidine box-1 element. The Histidine box-2 signature appears at 140 to 144 (HLEHH). A run of 3 helical transmembrane segments spans residues 164 to 184 (LVTN…FYAL), 197 to 217 (WEFI…LFFG), and 222 to 242 (AYLI…GHFI). Positions 271–275 (HNEHH) match the Histidine box-3 motif.

This sequence belongs to the fatty acid desaturase type 1 family. DEGS subfamily. In terms of tissue distribution, specifically expressed in flowers.

Its subcellular location is the endoplasmic reticulum membrane. The catalysed reaction is an N-acylsphinganine + 2 Fe(II)-[cytochrome b5] + O2 + 2 H(+) = an N-acylsphing-4-enine + 2 Fe(III)-[cytochrome b5] + 2 H2O. Sphingolipid-delta-4-desaturase required for the biosynthesis of delta-4-unsaturated sphingolipids and derivatives. May be required for the biosynthesis of glucosylceramides. The chain is Sphingolipid delta(4)-desaturase DES1-like from Arabidopsis thaliana (Mouse-ear cress).